The sequence spans 231 residues: 5'-methylthioadenosine/S-adenosylhomocysteine nucleosidase (231 aa).

E12 functions as the Proton acceptor in the catalytic mechanism. Substrate-binding positions include G78, M153, and 174-175; that span reads ME. Catalysis depends on D198, which acts as the Proton donor.

The protein belongs to the PNP/UDP phosphorylase family. MtnN subfamily.

The enzyme catalyses S-adenosyl-L-homocysteine + H2O = S-(5-deoxy-D-ribos-5-yl)-L-homocysteine + adenine. It carries out the reaction S-methyl-5'-thioadenosine + H2O = 5-(methylsulfanyl)-D-ribose + adenine. The catalysed reaction is 5'-deoxyadenosine + H2O = 5-deoxy-D-ribose + adenine. The protein operates within amino-acid biosynthesis; L-methionine biosynthesis via salvage pathway; S-methyl-5-thio-alpha-D-ribose 1-phosphate from S-methyl-5'-thioadenosine (hydrolase route): step 1/2. Functionally, catalyzes the irreversible cleavage of the glycosidic bond in both 5'-methylthioadenosine (MTA) and S-adenosylhomocysteine (SAH/AdoHcy) to adenine and the corresponding thioribose, 5'-methylthioribose and S-ribosylhomocysteine, respectively. Also cleaves 5'-deoxyadenosine, a toxic by-product of radical S-adenosylmethionine (SAM) enzymes, into 5-deoxyribose and adenine. This is 5'-methylthioadenosine/S-adenosylhomocysteine nucleosidase from Bacillus pumilus (strain SAFR-032).